Here is a 310-residue protein sequence, read N- to C-terminus: N-acetyl-gamma-glutamyl-phosphate reductase (310 aa).

The active site involves C117.

Belongs to the NAGSA dehydrogenase family. Type 2 subfamily.

The protein resides in the cytoplasm. It carries out the reaction N-acetyl-L-glutamate 5-semialdehyde + phosphate + NADP(+) = N-acetyl-L-glutamyl 5-phosphate + NADPH + H(+). It participates in amino-acid biosynthesis; L-arginine biosynthesis; N(2)-acetyl-L-ornithine from L-glutamate: step 3/4. Catalyzes the NADPH-dependent reduction of N-acetyl-5-glutamyl phosphate to yield N-acetyl-L-glutamate 5-semialdehyde. This Brucella ovis (strain ATCC 25840 / 63/290 / NCTC 10512) protein is N-acetyl-gamma-glutamyl-phosphate reductase.